Reading from the N-terminus, the 415-residue chain is WD repeat-containing protein JIP5 (415 aa).

WD repeat units follow at residues 5–44 (DVGS…KEQA), 104–142 (AHDS…CVRE), 145–184 (QHFD…PEPF), 189–228 (DQDD…GDCV), and 233–282 (GHPL…VVAD). The disordered stretch occupies residues 328 to 415 (GALGVTNENE…DVENAFFDEL (88 aa)). Over residues 337–346 (EQSDEDEEMD) the composition is skewed to acidic residues. The segment covering 358 to 367 (DGSGSSSSGE) has biased composition (low complexity). Residues 390–405 (EQKPLDVDKPKGRNEI) are compositionally biased toward basic and acidic residues.

It belongs to the WD repeat WDR55 family.

The protein localises to the nucleus. It localises to the nucleolus. The sequence is that of WD repeat-containing protein JIP5 (JIP5) from Laccaria bicolor (strain S238N-H82 / ATCC MYA-4686) (Bicoloured deceiver).